A 1130-amino-acid chain; its full sequence is Roquin-1 (1130 aa).

C14, C17, C33, H35, C38, C50, and D53 together coordinate Zn(2+). The RING-type; degenerate zinc-finger motif lies at 14–54; it reads CPICTQTFDETIRKPISLGCGHTVCKMCLNKLHRKACPFDQ. The interval 128–176 is HEPN-N; that stretch reads VLSRPMQRKLVTLVHCQLVEEEGRIRAMRAARSLGERTVTELILQHQNP. An ROQ region spans residues 177–326; the sequence is QQLSSNLWAA…MQSIIDKLQT (150 aa). The tract at residues 327 to 399 is HEPN-C; sequence PASFAQSVQE…GLVDYIQNHS (73 aa). A C3H1-type zinc finger spans residues 413 to 441; sequence KYKTYMCRDMKQRGGCPRGASCTFAHSQE. The residue at position 462 (S462) is a Phosphoserine. Disordered stretches follow at residues 493–567 and 722–750; these read LPNG…DLPP and PHPA…PSLD. A compositionally biased stretch (polar residues) spans 497–506; the sequence is IASSGSTVTQ. S531 and S535 each carry phosphoserine. Pro residues-rich tracts occupy residues 553 to 567 and 732 to 746; these read NPHP…DLPP and PRDP…PQPH. Phosphoserine is present on residues S861, S1107, and S1110. The segment at 1100 to 1130 is disordered; that stretch reads KTSSLNLSEDSEGGGDNNDSQRSGVVSNSAP. Positions 1116–1130 are enriched in polar residues; that stretch reads NNDSQRSGVVSNSAP.

Interacts with DDX6 and EDC4. Interacts with CCR4-NOT deadenylase complex. Interacts with RC3H1; the interaction is RNA independent. Post-translationally, proteolytically cleaved after Arg-510 and Arg-579 by MALT1 in activated CD4(+) T cells; cleavage at Arg-510 and Arg-579 is critical for promoting RC3H1 degradation in response to T-cell receptor (TCR) stimulation, and hence is necessary for prolonging the stability of a set of mRNAs controlling Th17 cell differentiation. As to expression, widely expressed, with highest levels in lymph node and thymus and slightly lesser amounts in brain, lung, and spleen (at protein level). Very weak expression in heart, muscle, and kidney (at protein level). Expressed in CD4(+) helper T-cells (at protein level).

It is found in the cytoplasm. It localises to the P-body. The protein resides in the cytoplasmic granule. The enzyme catalyses S-ubiquitinyl-[E2 ubiquitin-conjugating enzyme]-L-cysteine + [acceptor protein]-L-lysine = [E2 ubiquitin-conjugating enzyme]-L-cysteine + N(6)-ubiquitinyl-[acceptor protein]-L-lysine.. The protein operates within protein modification; protein ubiquitination. Post-transcriptional repressor of mRNAs containing a conserved stem loop motif, called constitutive decay element (CDE), which is often located in the 3'-UTR, as in HMGXB3, ICOS, IER3, NFKBID, NFKBIZ, PPP1R10, TNF, TNFRSF4 and in many more mRNAs. Cleaves translationally inactive mRNAs harboring a stem-loop (SL), often located in their 3'-UTRs, during the early phase of inflammation in a helicase UPF1-independent manner. Binds to CDE and promotes mRNA deadenylation and degradation. This process does not involve miRNAs. In follicular helper T (Tfh) cells, represses of ICOS and TNFRSF4/Ox40 expression, thus preventing spontaneous Tfh cell differentiation, germinal center B-cell differentiation in the absence of immunization and autoimmunity. In resting or LPS-stimulated macrophages, controls inflammation by suppressing TNF expression. Also recognizes CDE in its own mRNA and in that of paralogous RC3H2, possibly leading to feedback loop regulation. Inhibits cooperatively with ZC3H12A the differentiation of helper T cells Th17 in lungs. They repress target mRNA encoding the Th17 cell-promoting factors IL6, ICOS, REL, IRF4, NFKBID and NFKBIZ. The cooperation requires RNA-binding by RC3H1 and the nuclease activity of ZC3H12A. Recognizes and binds mRNAs containing a hexaloop stem-loop motif, called alternative decay element (ADE). Together with ZC3H12A, destabilizes TNFRSF4/OX40 mRNA by binding to the conserved stem loop structure in its 3'UTR. Able to interact with double-stranded RNA. miRNA-binding protein that regulates microRNA homeostasis. Enhances DICER-mediated processing of pre-MIR146a but reduces mature MIR146a levels through an increase of 3' end uridylation. Both inhibits ICOS mRNA expression and they may act together to exert the suppression. Acts as a ubiquitin E3 ligase. Pairs with E2 enzymes UBE2A, UBE2B, UBE2D2, UBE2F, UBE2G1, UBE2G2 and UBE2L3 and produces polyubiquitin chains. Shows the strongest activity when paired with UBE2N:UBE2V1 or UBE2N:UBE2V2 E2 complexes and generate both short and long polyubiquitin chains. This Mus musculus (Mouse) protein is Roquin-1.